Reading from the N-terminus, the 732-residue chain is Probable ATP-dependent RNA helicase DHX35 homolog (732 aa).

The tract at residues 1-50 is disordered; that stretch reads MSYHPGHGHRQEPRKGAGARRGFARPDDSADAPRTGPLIFEERSTENAGA. In terms of domain architecture, Helicase ATP-binding spans 87 to 251; that stretch reads LYMCERYRTI…FEMNETGNSD (165 aa). ATP is bound at residue 100–107; it reads GETGCGKS. Residues 198–201 carry the DEAH box motif; that stretch reads DEAH. The Helicase C-terminal domain maps to 283 to 457; sequence AVDTVINIHK…STILQLKALG (175 aa).

It belongs to the DEAD box helicase family. DEAH subfamily.

It catalyses the reaction ATP + H2O = ADP + phosphate + H(+). This is Probable ATP-dependent RNA helicase DHX35 homolog from Caenorhabditis elegans.